The following is a 448-amino-acid chain: Cytoplasmic tRNA 2-thiolation protein 2 (448 aa).

Belongs to the CTU2/NCS2 family.

It is found in the cytoplasm. It functions in the pathway tRNA modification; 5-methoxycarbonylmethyl-2-thiouridine-tRNA biosynthesis. Functionally, plays a central role in 2-thiolation of mcm(5)S(2)U at tRNA wobble positions of tRNA(Lys), tRNA(Glu) and tRNA(Gln). May act by forming a heterodimer with NCS6 that ligates sulfur from thiocarboxylated URM1 onto the uridine of tRNAs at wobble position. Prior mcm(5) tRNA modification by the elongator complex is required for 2-thiolation. May also be involved in protein urmylation. This Debaryomyces hansenii (strain ATCC 36239 / CBS 767 / BCRC 21394 / JCM 1990 / NBRC 0083 / IGC 2968) (Yeast) protein is Cytoplasmic tRNA 2-thiolation protein 2.